Reading from the N-terminus, the 875-residue chain is Serine/threonine-protein kinase ATG1 (875 aa).

A Protein kinase domain is found at 22–318 (YSIGPEIGKG…FNEFFNDPLI (297 aa)). Residues 28 to 36 (IGKGSFATV) and Lys51 contribute to the ATP site. Asp168 acts as the Proton acceptor in catalysis. Residues 367–379 (EKSKQDLPAREVS) show a composition bias toward basic and acidic residues. Disordered regions lie at residues 367–422 (EKSK…QPHN) and 470–515 (INPR…DRRI). The span at 380–389 (THASESQTKA) shows a compositional bias: polar residues. Residues 390-405 (VDTRPSSRDEEIKEII) show a composition bias toward basic and acidic residues. 3 stretches are compositionally biased toward polar residues: residues 406–420 (NKNS…SIQP), 473–490 (RRTS…NNMQ), and 497–508 (LRSNSSGSQRRP).

The protein belongs to the protein kinase superfamily. Ser/Thr protein kinase family. APG1/unc-51/ULK1 subfamily. As to quaternary structure, homodimer. Forms a ternary complex with ATG13 and ATG17.

It localises to the cytoplasm. The protein resides in the preautophagosomal structure membrane. It carries out the reaction L-seryl-[protein] + ATP = O-phospho-L-seryl-[protein] + ADP + H(+). The catalysed reaction is L-threonyl-[protein] + ATP = O-phospho-L-threonyl-[protein] + ADP + H(+). Its function is as follows. Serine/threonine protein kinase involved in the cytoplasm to vacuole transport (Cvt) and found to be essential in autophagy, where it is required for the formation of autophagosomes. Involved in the clearance of protein aggregates which cannot be efficiently cleared by the proteasome. Required for selective autophagic degradation of the nucleus (nucleophagy) as well as for mitophagy which contributes to regulate mitochondrial quantity and quality by eliminating the mitochondria to a basal level to fulfill cellular energy requirements and preventing excess ROS production. Also involved in endoplasmic reticulum-specific autophagic process, in selective removal of ER-associated degradation (ERAD) substrates. Plays a key role in ATG9 and ATG23 cycling through the pre-autophagosomal structure and is necessary to promote ATG18 binding to ATG9 through phosphorylation of ATG9. Catalyzes phosphorylation of ATG4, decreasing the interaction between ATG4 and ATG8 and impairing deconjugation of PE-conjugated forms of ATG8. This is Serine/threonine-protein kinase ATG1 from Debaryomyces hansenii (strain ATCC 36239 / CBS 767 / BCRC 21394 / JCM 1990 / NBRC 0083 / IGC 2968) (Yeast).